The sequence spans 201 residues: 3-isopropylmalate dehydratase small subunit (201 aa).

It belongs to the LeuD family. LeuD type 1 subfamily. As to quaternary structure, heterodimer of LeuC and LeuD.

The enzyme catalyses (2R,3S)-3-isopropylmalate = (2S)-2-isopropylmalate. It participates in amino-acid biosynthesis; L-leucine biosynthesis; L-leucine from 3-methyl-2-oxobutanoate: step 2/4. In terms of biological role, catalyzes the isomerization between 2-isopropylmalate and 3-isopropylmalate, via the formation of 2-isopropylmaleate. The polypeptide is 3-isopropylmalate dehydratase small subunit (Ruegeria sp. (strain TM1040) (Silicibacter sp.)).